A 123-amino-acid chain; its full sequence is Large ribosomal subunit protein uL29 (123 aa).

It belongs to the universal ribosomal protein uL29 family. As to quaternary structure, component of the large ribosomal subunit.

It is found in the cytoplasm. Its function is as follows. Component of the large ribosomal subunit. The ribosome is a large ribonucleoprotein complex responsible for the synthesis of proteins in the cell. This Ictalurus punctatus (Channel catfish) protein is Large ribosomal subunit protein uL29 (rpl35).